Consider the following 591-residue polypeptide: Speriolin (591 aa).

Residues 1-42 (MSLLTNYEGLRHQIERLVRENEELKKLVRLIRENHELKSAIK) adopt a coiled-coil conformation. Residues 1-78 (MSLLTNYEGL…NNGVFLPPSP (78 aa)) are necessary for targeting centrosomes. Residues 302–314 (NTSDTQAQPSAAQ) show a composition bias toward polar residues. 2 disordered regions span residues 302 to 331 (NTSD…TSPT) and 346 to 435 (ATSY…ENPR). A compositionally biased stretch (low complexity) spans 317–331 (VVPASVPTSPTTSPT). 2 stretches are compositionally biased toward polar residues: residues 346–357 (ATSYTPSSTTHI) and 390–401 (PRTSSSPASVND).

It belongs to the speriolin family. As to quaternary structure, found in a complex with CDC20, CDC27 and TUBG1. Interacts with CDC20. Detected only in testis.

The protein localises to the cytoplasm. The protein resides in the cytoskeleton. Its subcellular location is the microtubule organizing center. It is found in the centrosome. This is Speriolin (SPATC1) from Homo sapiens (Human).